The chain runs to 785 residues: Endonuclease MutS2 (785 aa).

334 to 341 (GPNTGGKT) contacts ATP. Residues 710 to 785 (LDLRGYNVED…GVGATIAELK (76 aa)) enclose the Smr domain.

The protein belongs to the DNA mismatch repair MutS family. MutS2 subfamily. In terms of assembly, homodimer. Binds to stalled ribosomes, contacting rRNA.

In terms of biological role, endonuclease that is involved in the suppression of homologous recombination and thus may have a key role in the control of bacterial genetic diversity. Its function is as follows. Acts as a ribosome collision sensor, splitting the ribosome into its 2 subunits. Detects stalled/collided 70S ribosomes which it binds and splits by an ATP-hydrolysis driven conformational change. Acts upstream of the ribosome quality control system (RQC), a ribosome-associated complex that mediates the extraction of incompletely synthesized nascent chains from stalled ribosomes and their subsequent degradation. Probably generates substrates for RQC. This chain is Endonuclease MutS2, found in Brevibacillus brevis (strain 47 / JCM 6285 / NBRC 100599).